Consider the following 553-residue polypeptide: Chaperonin GroEL (553 aa).

Residues 30–33, Lys-51, 87–91, Gly-416, and Asp-496 contribute to the ATP site; these read TLGP and DGTTT.

The protein belongs to the chaperonin (HSP60) family. In terms of assembly, forms a cylinder of 14 subunits composed of two heptameric rings stacked back-to-back. Interacts with the co-chaperonin GroES.

It is found in the cytoplasm. It carries out the reaction ATP + H2O + a folded polypeptide = ADP + phosphate + an unfolded polypeptide.. Functionally, together with its co-chaperonin GroES, plays an essential role in assisting protein folding. The GroEL-GroES system forms a nano-cage that allows encapsulation of the non-native substrate proteins and provides a physical environment optimized to promote and accelerate protein folding. The polypeptide is Chaperonin GroEL (Alkalilimnicola ehrlichii (strain ATCC BAA-1101 / DSM 17681 / MLHE-1)).